We begin with the raw amino-acid sequence, 185 residues long: Large ribosomal subunit protein uL5m (185 aa).

This sequence belongs to the universal ribosomal protein uL5 family.

It is found in the mitochondrion. This Brassica napus (Rape) protein is Large ribosomal subunit protein uL5m (RPL5).